Consider the following 172-residue polypeptide: MSEKEKKELTQECEELKEKYKELEEYAKRLKAEYENYREEVAREKRELIKNANEYLISKLIPVLDDFERALNQGEKGDAFYEGVKMIYKKLLNVLEKEGLTKIHVGEKFDPFEHEAVERVETEDVEEYTILEVVESGYKFHGKVLKPAKVKVAVKPRKKEERKVEEPSDKKE.

Belongs to the GrpE family. In terms of assembly, homodimer.

It is found in the cytoplasm. Functionally, participates actively in the response to hyperosmotic and heat shock by preventing the aggregation of stress-denatured proteins, in association with DnaK and GrpE. It is the nucleotide exchange factor for DnaK and may function as a thermosensor. Unfolded proteins bind initially to DnaJ; upon interaction with the DnaJ-bound protein, DnaK hydrolyzes its bound ATP, resulting in the formation of a stable complex. GrpE releases ADP from DnaK; ATP binding to DnaK triggers the release of the substrate protein, thus completing the reaction cycle. Several rounds of ATP-dependent interactions between DnaJ, DnaK and GrpE are required for fully efficient folding. In Thermotoga maritima (strain ATCC 43589 / DSM 3109 / JCM 10099 / NBRC 100826 / MSB8), this protein is Protein GrpE.